Here is a 298-residue protein sequence, read N- to C-terminus: Beta-soluble NSF attachment protein (298 aa).

Belongs to the SNAP family. Interacts with PRKCABP, and disrupts the interaction between GRIA2 and PRKCABP, leading to the internalization of GRIA2. As to expression, brain.

It is found in the membrane. Its function is as follows. Required for vesicular transport between the endoplasmic reticulum and the Golgi apparatus. The protein is Beta-soluble NSF attachment protein (NAPB) of Bos taurus (Bovine).